The following is a 466-amino-acid chain: 3-isopropylmalate dehydratase large subunit (466 aa).

Cysteine 347, cysteine 407, and cysteine 410 together coordinate [4Fe-4S] cluster.

It belongs to the aconitase/IPM isomerase family. LeuC type 1 subfamily. In terms of assembly, heterodimer of LeuC and LeuD. Requires [4Fe-4S] cluster as cofactor.

It catalyses the reaction (2R,3S)-3-isopropylmalate = (2S)-2-isopropylmalate. It participates in amino-acid biosynthesis; L-leucine biosynthesis; L-leucine from 3-methyl-2-oxobutanoate: step 2/4. Catalyzes the isomerization between 2-isopropylmalate and 3-isopropylmalate, via the formation of 2-isopropylmaleate. This chain is 3-isopropylmalate dehydratase large subunit, found in Escherichia coli O17:K52:H18 (strain UMN026 / ExPEC).